Consider the following 345-residue polypeptide: Phenylalanine--tRNA ligase alpha subunit (345 aa).

Glutamate 259 is a Mg(2+) binding site.

It belongs to the class-II aminoacyl-tRNA synthetase family. Phe-tRNA synthetase alpha subunit type 1 subfamily. Tetramer of two alpha and two beta subunits. The cofactor is Mg(2+).

The protein localises to the cytoplasm. It carries out the reaction tRNA(Phe) + L-phenylalanine + ATP = L-phenylalanyl-tRNA(Phe) + AMP + diphosphate + H(+). The protein is Phenylalanine--tRNA ligase alpha subunit of Lactococcus lactis subsp. cremoris (strain MG1363).